The sequence spans 529 residues: GMP synthase [glutamine-hydrolyzing] (529 aa).

Positions 3 to 204 constitute a Glutamine amidotransferase type-1 domain; the sequence is TVAIVDFGSQ…FLKIAGCTRD (202 aa). Catalysis depends on Cys-87, which acts as the Nucleophile. Catalysis depends on residues His-179 and Glu-181. A GMPS ATP-PPase domain is found at 205 to 395; that stretch reads WTMGSFLHTQ…LGLPSAILDR (191 aa). ATP is bound at residue 232–238; the sequence is SGGVDSS.

In terms of assembly, homodimer.

The enzyme catalyses XMP + L-glutamine + ATP + H2O = GMP + L-glutamate + AMP + diphosphate + 2 H(+). Its pathway is purine metabolism; GMP biosynthesis; GMP from XMP (L-Gln route): step 1/1. In terms of biological role, catalyzes the synthesis of GMP from XMP. This is GMP synthase [glutamine-hydrolyzing] from Anaplasma marginale (strain St. Maries).